A 112-amino-acid chain; its full sequence is Cytochrome c6 (112 aa).

The first 25 residues, 1 to 25 (MKTLLTILALTLVTLTTWLSTPAFA), serve as a signal peptide directing secretion. Heme c contacts are provided by Cys39, Cys42, His43, and Met83.

This sequence belongs to the cytochrome c family. PetJ subfamily. Monomer. In terms of processing, binds 1 heme c group covalently per subunit.

The protein localises to the cellular thylakoid lumen. Functionally, functions as an electron carrier between membrane-bound cytochrome b6-f and photosystem I in oxygenic photosynthesis. In Synechococcus sp. (strain ATCC 27167 / PCC 6312), this protein is Cytochrome c6.